The following is a 133-amino-acid chain: Holo-[acyl-carrier-protein] synthase (133 aa).

The Mg(2+) site is built by aspartate 8 and glutamate 57.

It belongs to the P-Pant transferase superfamily. AcpS family. Mg(2+) serves as cofactor.

It localises to the cytoplasm. The enzyme catalyses apo-[ACP] + CoA = holo-[ACP] + adenosine 3',5'-bisphosphate + H(+). Its function is as follows. Transfers the 4'-phosphopantetheine moiety from coenzyme A to a Ser of acyl-carrier-protein. This chain is Holo-[acyl-carrier-protein] synthase, found in Chelativorans sp. (strain BNC1).